A 501-amino-acid chain; its full sequence is NAD(P)H-quinone oxidoreductase chain 4, chloroplastic (501 aa).

14 helical membrane-spanning segments follow: residues 4 to 24 (FPWL…ILFL), 35 to 55 (YTIC…CYHF), 84 to 104 (GLSI…TLAA), 111 to 129 (SRLL…IGSF), 134 to 154 (LLLF…LLSM), 168 to 188 (FILY…GMDL), 209 to 229 (ALEI…SPII), 243 to 263 (HYST…YGLI), 273 to 293 (AHSI…IYAA), 306 to 326 (IAYS…SITD), 331 to 351 (GAIL…FLAG), 387 to 407 (LALP…GIIT), 417 to 437 (ILIT…SLSM), and 463 to 483 (LFVS…PDFV).

It belongs to the complex I subunit 4 family.

It is found in the plastid. The protein resides in the chloroplast thylakoid membrane. The enzyme catalyses a plastoquinone + NADH + (n+1) H(+)(in) = a plastoquinol + NAD(+) + n H(+)(out). It catalyses the reaction a plastoquinone + NADPH + (n+1) H(+)(in) = a plastoquinol + NADP(+) + n H(+)(out). The sequence is that of NAD(P)H-quinone oxidoreductase chain 4, chloroplastic from Buxus microphylla (Littleleaf boxwood).